Here is a 346-residue protein sequence, read N- to C-terminus: Lipooligosaccharide heptosyltransferase 2 (346 aa).

It belongs to the glycosyltransferase 9 family.

It carries out the reaction an L-alpha-D-Hep-(1-&gt;5)-[alpha-Kdo-(2-&gt;4)]-alpha-Kdo-(2-&gt;6)-lipid A + ADP-L-glycero-beta-D-manno-heptose = an L-alpha-D-Hep-(1-&gt;3)-L-alpha-D-Hep-(1-&gt;5)-[alpha-Kdo-(2-&gt;4)]-alpha-Kdo-(2-&gt;6)-lipid A + ADP + H(+). Its pathway is bacterial outer membrane biogenesis; LOS core biosynthesis. Glycosyltransferase involved in the biosynthesis of the core oligosaccharide region of lipooligosaccharide (LOS). Catalyzes the addition of a heptose unit to the heptosyl-Kdo2-lipid A module. This Haemophilus influenzae (strain ATCC 51907 / DSM 11121 / KW20 / Rd) protein is Lipooligosaccharide heptosyltransferase 2 (waaF).